A 531-amino-acid polypeptide reads, in one-letter code: UPF0159 protein CPn_0746/CP_1126/CPj0746/CpB0774 (531 aa).

ThyX domains are found at residues 38-274 (KGAL…AEPH) and 309-511 (PSVQ…FKFV).

Belongs to the UPF0159 family.

The polypeptide is UPF0159 protein CPn_0746/CP_1126/CPj0746/CpB0774 (Chlamydia pneumoniae (Chlamydophila pneumoniae)).